The sequence spans 362 residues: Phosphoserine aminotransferase (362 aa).

2 residues coordinate L-glutamate: serine 9 and arginine 42. Pyridoxal 5'-phosphate-binding positions include 76-77, tryptophan 102, threonine 153, aspartate 174, and glutamine 197; that span reads GR. Residue lysine 198 is modified to N6-(pyridoxal phosphate)lysine. Residue 239-240 coordinates pyridoxal 5'-phosphate; that stretch reads NT.

Belongs to the class-V pyridoxal-phosphate-dependent aminotransferase family. SerC subfamily. Homodimer. Requires pyridoxal 5'-phosphate as cofactor.

The protein localises to the cytoplasm. The catalysed reaction is O-phospho-L-serine + 2-oxoglutarate = 3-phosphooxypyruvate + L-glutamate. It carries out the reaction 4-(phosphooxy)-L-threonine + 2-oxoglutarate = (R)-3-hydroxy-2-oxo-4-phosphooxybutanoate + L-glutamate. It participates in amino-acid biosynthesis; L-serine biosynthesis; L-serine from 3-phospho-D-glycerate: step 2/3. Its pathway is cofactor biosynthesis; pyridoxine 5'-phosphate biosynthesis; pyridoxine 5'-phosphate from D-erythrose 4-phosphate: step 3/5. Functionally, catalyzes the reversible conversion of 3-phosphohydroxypyruvate to phosphoserine and of 3-hydroxy-2-oxo-4-phosphonooxybutanoate to phosphohydroxythreonine. This is Phosphoserine aminotransferase from Escherichia coli O6:K15:H31 (strain 536 / UPEC).